The following is a 328-amino-acid chain: Malate dehydrogenase 1 (328 aa).

An NAD(+)-binding site is contributed by Gly-12–Ala-18. The substrate site is built by Arg-93 and Arg-99. Residues Asn-106, Gln-113, and Val-130–Asn-132 each bind NAD(+). Residues Asn-132 and Arg-163 each coordinate substrate. His-188 serves as the catalytic Proton acceptor.

It belongs to the LDH/MDH superfamily. MDH type 2 family.

It catalyses the reaction (S)-malate + NAD(+) = oxaloacetate + NADH + H(+). Functionally, catalyzes the reversible oxidation of malate to oxaloacetate. The protein is Malate dehydrogenase 1 of Burkholderia vietnamiensis (strain G4 / LMG 22486) (Burkholderia cepacia (strain R1808)).